The sequence spans 156 residues: Isotocin-neurophysin IT 2 (156 aa).

Residues 1–19 (MTGAAVSVCLLYALSVCSA) form the signal peptide. A disulfide bridge links C20 with C25. G28 bears the Glycine amide mark. Disulfide bonds link C41-C85, C44-C58, C52-C75, C59-C65, C92-C105, C99-C117, and C106-C111.

Belongs to the vasopressin/oxytocin family. Seven disulfide bonds are present in neurophysin.

It localises to the secreted. Functionally, isotocin causes contraction of smooth muscles. This is Isotocin-neurophysin IT 2 from Oncorhynchus keta (Chum salmon).